The primary structure comprises 363 residues: Dihydroorotate dehydrogenase (quinone) (363 aa).

FMN is bound by residues 67 to 71 (AGFDK) and threonine 91. Residue lysine 71 coordinates substrate. A substrate-binding site is contributed by 116 to 120 (NRMGF). The FMN site is built by asparagine 156 and asparagine 189. Residue asparagine 189 participates in substrate binding. Serine 192 acts as the Nucleophile in catalysis. Position 194 (asparagine 194) interacts with substrate. Positions 231 and 259 each coordinate FMN. 260–261 (NT) lines the substrate pocket. FMN-binding positions include glycine 287, glycine 316, and 337–338 (YT).

This sequence belongs to the dihydroorotate dehydrogenase family. Type 2 subfamily. As to quaternary structure, monomer. FMN is required as a cofactor.

Its subcellular location is the cell membrane. It catalyses the reaction (S)-dihydroorotate + a quinone = orotate + a quinol. It functions in the pathway pyrimidine metabolism; UMP biosynthesis via de novo pathway; orotate from (S)-dihydroorotate (quinone route): step 1/1. Its function is as follows. Catalyzes the conversion of dihydroorotate to orotate with quinone as electron acceptor. The chain is Dihydroorotate dehydrogenase (quinone) from Kocuria rhizophila (strain ATCC 9341 / DSM 348 / NBRC 103217 / DC2201).